Reading from the N-terminus, the 55-residue chain is Large ribosomal subunit protein bL33 (55 aa).

The protein belongs to the bacterial ribosomal protein bL33 family.

This chain is Large ribosomal subunit protein bL33, found in Aeromonas hydrophila subsp. hydrophila (strain ATCC 7966 / DSM 30187 / BCRC 13018 / CCUG 14551 / JCM 1027 / KCTC 2358 / NCIMB 9240 / NCTC 8049).